A 512-amino-acid polypeptide reads, in one-letter code: Maturase K (512 aa).

This sequence belongs to the intron maturase 2 family. MatK subfamily.

It is found in the plastid. The protein localises to the chloroplast. Usually encoded in the trnK tRNA gene intron. Probably assists in splicing its own and other chloroplast group II introns. This Acer campestre (Field maple) protein is Maturase K.